The following is a 480-amino-acid chain: Protein nucleotidyltransferase YdiU (480 aa).

ATP-binding residues include Gly86, Gly88, Arg89, Lys109, Asp121, Gly122, Arg172, and Arg179. Asp248 functions as the Proton acceptor in the catalytic mechanism. The Mg(2+) site is built by Asn249 and Asp258. An ATP-binding site is contributed by Asp258.

Belongs to the SELO family. Mg(2+) serves as cofactor. The cofactor is Mn(2+).

It catalyses the reaction L-seryl-[protein] + ATP = 3-O-(5'-adenylyl)-L-seryl-[protein] + diphosphate. The enzyme catalyses L-threonyl-[protein] + ATP = 3-O-(5'-adenylyl)-L-threonyl-[protein] + diphosphate. It carries out the reaction L-tyrosyl-[protein] + ATP = O-(5'-adenylyl)-L-tyrosyl-[protein] + diphosphate. The catalysed reaction is L-histidyl-[protein] + UTP = N(tele)-(5'-uridylyl)-L-histidyl-[protein] + diphosphate. It catalyses the reaction L-seryl-[protein] + UTP = O-(5'-uridylyl)-L-seryl-[protein] + diphosphate. The enzyme catalyses L-tyrosyl-[protein] + UTP = O-(5'-uridylyl)-L-tyrosyl-[protein] + diphosphate. In terms of biological role, nucleotidyltransferase involved in the post-translational modification of proteins. It can catalyze the addition of adenosine monophosphate (AMP) or uridine monophosphate (UMP) to a protein, resulting in modifications known as AMPylation and UMPylation. This chain is Protein nucleotidyltransferase YdiU, found in Klebsiella pneumoniae (strain 342).